We begin with the raw amino-acid sequence, 64 residues long: Conotoxin Cal6.26 (64 aa).

The N-terminal stretch at 1-22 is a signal peptide; sequence MKLTCVMIVAVLVLTVCKVVTS. Intrachain disulfides connect Cys32–Cys50, Cys40–Cys54, and Cys49–Cys60.

As to expression, expressed by the venom duct.

It localises to the secreted. Functionally, probable neurotoxin. This chain is Conotoxin Cal6.26, found in Californiconus californicus (California cone).